The chain runs to 159 residues: ATP synthase subunit b (159 aa).

The helical transmembrane segment at 2-22 threads the bilayer; that stretch reads NISIPQIIAAILNFIILLLIV.

Belongs to the ATPase B chain family. As to quaternary structure, F-type ATPases have 2 components, F(1) - the catalytic core - and F(0) - the membrane proton channel. F(1) has five subunits: alpha(3), beta(3), gamma(1), delta(1), epsilon(1). F(0) has three main subunits: a(1), b(2) and c(10-14). The alpha and beta chains form an alternating ring which encloses part of the gamma chain. F(1) is attached to F(0) by a central stalk formed by the gamma and epsilon chains, while a peripheral stalk is formed by the delta and b chains.

It localises to the cell membrane. Functionally, f(1)F(0) ATP synthase produces ATP from ADP in the presence of a proton or sodium gradient. F-type ATPases consist of two structural domains, F(1) containing the extramembraneous catalytic core and F(0) containing the membrane proton channel, linked together by a central stalk and a peripheral stalk. During catalysis, ATP synthesis in the catalytic domain of F(1) is coupled via a rotary mechanism of the central stalk subunits to proton translocation. Its function is as follows. Component of the F(0) channel, it forms part of the peripheral stalk, linking F(1) to F(0). In Clostridium botulinum (strain ATCC 19397 / Type A), this protein is ATP synthase subunit b.